The following is a 325-amino-acid chain: tRNA N6-adenosine threonylcarbamoyltransferase (325 aa).

Fe cation is bound by residues His-107, His-111, and Tyr-127. Residues 127–131 (YVSGG), Asp-159, Gly-172, Glu-176, and Asn-257 each bind substrate. Asp-285 lines the Fe cation pocket.

The protein belongs to the KAE1 / TsaD family. In terms of assembly, monomer. Component of the KEOPS complex that consists of Kae1, Bud32, Cgi121 and Pcc1; the whole complex dimerizes. Requires Fe(2+) as cofactor.

The protein localises to the cytoplasm. The enzyme catalyses L-threonylcarbamoyladenylate + adenosine(37) in tRNA = N(6)-L-threonylcarbamoyladenosine(37) in tRNA + AMP + H(+). Functionally, required for the formation of a threonylcarbamoyl group on adenosine at position 37 (t(6)A37) in tRNAs that read codons beginning with adenine. Is a component of the KEOPS complex that is probably involved in the transfer of the threonylcarbamoyl moiety of threonylcarbamoyl-AMP (TC-AMP) to the N6 group of A37. Kae1 likely plays a direct catalytic role in this reaction, but requires other protein(s) of the complex to fulfill this activity. In Thermococcus gammatolerans (strain DSM 15229 / JCM 11827 / EJ3), this protein is tRNA N6-adenosine threonylcarbamoyltransferase.